Consider the following 367-residue polypeptide: Cell-death-related nuclease 7 (367 aa).

The first 18 residues, 1-18 (MRLYFVLIFSVIFTTGNG), serve as a signal peptide directing secretion. N-linked (GlcNAc...) asparagine glycosylation is present at N253.

It belongs to the DNase II family.

The protein is Cell-death-related nuclease 7 (crn-7) of Caenorhabditis elegans.